The following is a 428-amino-acid chain: Enolase (428 aa).

Gln167 serves as a coordination point for (2R)-2-phosphoglycerate. The active-site Proton donor is Glu209. Residues Asp246, Glu289, and Asp316 each contribute to the Mg(2+) site. 4 residues coordinate (2R)-2-phosphoglycerate: Lys341, Arg370, Ser371, and Lys392. Lys341 functions as the Proton acceptor in the catalytic mechanism.

It belongs to the enolase family. In terms of assembly, component of the RNA degradosome, a multiprotein complex involved in RNA processing and mRNA degradation. The cofactor is Mg(2+).

The protein localises to the cytoplasm. The protein resides in the secreted. Its subcellular location is the cell surface. The catalysed reaction is (2R)-2-phosphoglycerate = phosphoenolpyruvate + H2O. Its pathway is carbohydrate degradation; glycolysis; pyruvate from D-glyceraldehyde 3-phosphate: step 4/5. Its function is as follows. Catalyzes the reversible conversion of 2-phosphoglycerate (2-PG) into phosphoenolpyruvate (PEP). It is essential for the degradation of carbohydrates via glycolysis. This is Enolase from Saccharophagus degradans (strain 2-40 / ATCC 43961 / DSM 17024).